Reading from the N-terminus, the 255-residue chain is Protein NEN4 (255 aa).

The 164-residue stretch at 11 to 174 (VFFDLETNVP…DDVRMNLEVL (164 aa)) folds into the Exonuclease domain. Residues Asp14 and Glu16 each contribute to the Mg(2+) site. His161 functions as the Proton donor/acceptor in the catalytic mechanism. Residue Asp166 participates in Mg(2+) binding.

Mg(2+) serves as cofactor. As to expression, expressed in the sieve elements and phloem pole pericycle cells.

The protein localises to the nucleus. In terms of biological role, probable exonuclease required for enuclation of sieve elements. The sequence is that of Protein NEN4 from Arabidopsis thaliana (Mouse-ear cress).